Here is a 405-residue protein sequence, read N- to C-terminus: Probable tRNA sulfurtransferase (405 aa).

In terms of domain architecture, THUMP spans 60–165 (DKVMGRLKLV…LNGIFLSSET (106 aa)). ATP contacts are provided by residues 183-184 (ML), 208-209 (HF), Arg-265, Gly-287, and Gln-296.

This sequence belongs to the ThiI family.

The protein localises to the cytoplasm. The enzyme catalyses [ThiI sulfur-carrier protein]-S-sulfanyl-L-cysteine + a uridine in tRNA + 2 reduced [2Fe-2S]-[ferredoxin] + ATP + H(+) = [ThiI sulfur-carrier protein]-L-cysteine + a 4-thiouridine in tRNA + 2 oxidized [2Fe-2S]-[ferredoxin] + AMP + diphosphate. It carries out the reaction [ThiS sulfur-carrier protein]-C-terminal Gly-Gly-AMP + S-sulfanyl-L-cysteinyl-[cysteine desulfurase] + AH2 = [ThiS sulfur-carrier protein]-C-terminal-Gly-aminoethanethioate + L-cysteinyl-[cysteine desulfurase] + A + AMP + 2 H(+). It participates in cofactor biosynthesis; thiamine diphosphate biosynthesis. Its function is as follows. Catalyzes the ATP-dependent transfer of a sulfur to tRNA to produce 4-thiouridine in position 8 of tRNAs, which functions as a near-UV photosensor. Also catalyzes the transfer of sulfur to the sulfur carrier protein ThiS, forming ThiS-thiocarboxylate. This is a step in the synthesis of thiazole, in the thiamine biosynthesis pathway. The sulfur is donated as persulfide by IscS. The polypeptide is Probable tRNA sulfurtransferase (Lactiplantibacillus plantarum (strain ATCC BAA-793 / NCIMB 8826 / WCFS1) (Lactobacillus plantarum)).